The chain runs to 415 residues: Tyrosine--tRNA ligase (415 aa).

Tyrosine 34 contributes to the L-tyrosine binding site. The 'HIGH' region motif lies at 39–48 (PTADSLHLGH). Residues tyrosine 164 and glutamine 168 each contribute to the L-tyrosine site. The 'KMSKS' region motif lies at 226-230 (KFGKS). Residue lysine 229 coordinates ATP. The S4 RNA-binding domain occupies 348–415 (KNIVDFLVDG…KKKYFLGKIK (68 aa)).

This sequence belongs to the class-I aminoacyl-tRNA synthetase family. TyrS type 1 subfamily. In terms of assembly, homodimer.

The protein resides in the cytoplasm. The catalysed reaction is tRNA(Tyr) + L-tyrosine + ATP = L-tyrosyl-tRNA(Tyr) + AMP + diphosphate + H(+). In terms of biological role, catalyzes the attachment of tyrosine to tRNA(Tyr) in a two-step reaction: tyrosine is first activated by ATP to form Tyr-AMP and then transferred to the acceptor end of tRNA(Tyr). This is Tyrosine--tRNA ligase from Leuconostoc citreum (strain KM20).